Consider the following 516-residue polypeptide: Bifunctional pantoate ligase/cytidylate kinase (516 aa).

The pantoate--beta-alanine ligase stretch occupies residues 1-279 (MVRKIFQTNA…CGSTRLIDHT (279 aa)). 29-36 (MGGLHPGH) is a binding site for ATP. His-36 acts as the Proton donor in catalysis. Gln-64 is a binding site for (R)-pantoate. A beta-alanine-binding site is contributed by Gln-64. 153–156 (GEKD) serves as a coordination point for ATP. Residue Gln-159 coordinates (R)-pantoate. 190–193 (YSSR) lines the ATP pocket. The tract at residues 280–516 (FLMHRKPIIA…PEEVWPTPNS (237 aa)) is cytidylate kinase.

The protein in the N-terminal section; belongs to the pantothenate synthetase family. In the C-terminal section; belongs to the cytidylate kinase family. Type 1 subfamily.

Its subcellular location is the cytoplasm. The enzyme catalyses (R)-pantoate + beta-alanine + ATP = (R)-pantothenate + AMP + diphosphate + H(+). The catalysed reaction is CMP + ATP = CDP + ADP. It carries out the reaction dCMP + ATP = dCDP + ADP. Its pathway is cofactor biosynthesis; (R)-pantothenate biosynthesis; (R)-pantothenate from (R)-pantoate and beta-alanine: step 1/1. Functionally, catalyzes the condensation of pantoate with beta-alanine in an ATP-dependent reaction via a pantoyl-adenylate intermediate. Catalyzes the transfer of a phosphate group from ATP to either CMP or dCMP to form CDP or dCDP and ADP, respectively. The polypeptide is Bifunctional pantoate ligase/cytidylate kinase (Prochlorococcus marinus (strain NATL1A)).